The primary structure comprises 97 residues: MTDLRHYDVIVSPSITEKSTLVSDFNQVVFNVARTASKPEIKAAVEALFGVKVTAVNTLLRKGKTKRFRGFAGKQKDVKKAIVTLAEGQSIDVSTGL.

It belongs to the universal ribosomal protein uL23 family. In terms of assembly, part of the 50S ribosomal subunit. Contacts protein L29, and trigger factor when it is bound to the ribosome.

Its function is as follows. One of the early assembly proteins it binds 23S rRNA. One of the proteins that surrounds the polypeptide exit tunnel on the outside of the ribosome. Forms the main docking site for trigger factor binding to the ribosome. This is Large ribosomal subunit protein uL23 from Allorhizobium ampelinum (strain ATCC BAA-846 / DSM 112012 / S4) (Agrobacterium vitis (strain S4)).